The sequence spans 172 residues: LSM1-LSM7 complex subunit LSM1 (172 aa).

A compositionally biased stretch (basic and acidic residues) spans 1-17; the sequence is MSANSKDRNQSNQDAKR. The disordered stretch occupies residues 1–22; sequence MSANSKDRNQSNQDAKRQQQNF. A Sm domain is found at 41-118; the sequence is TTTAAIVSSV…VVMLGEVDID (78 aa).

Belongs to the snRNP Sm proteins family. As to quaternary structure, component of the heptameric LSM1-LSM7 complex that forms a seven-membered ring structure with a donut shape. The LSm subunits are arranged in the order LSM1, LSM2, LSM3, LSM6, LSM5, LSM7 and LSM4. Except for LSM1, where a C-terminal helix crosses the ring structure to form additional interactions with LSM3 and LSM6, each subunit interacts only with its two neighboring subunits. The LSM1-LSM7 complex interacts with PAT1; within the complex PAT1 has direct interactions with LSM2 and LSM3. The LSM1-LSM7 complex interacts with XRN1.

The protein localises to the nucleus. It is found in the cytoplasm. The protein resides in the P-body. In terms of biological role, component of the cytoplasmic LSM1-LSM7 complex which is involved in mRNA degradation by activating the decapping step. Together with PAT1, the LSM1-LSM7 complex binds to osmotic stress-activated mRNAs to attenuate the osmotic stress response, probably by limiting ribosome access to the mRNA and consequently translation. The protein is LSM1-LSM7 complex subunit LSM1 (LSM1) of Saccharomyces cerevisiae (strain ATCC 204508 / S288c) (Baker's yeast).